The primary structure comprises 380 residues: Endonuclease III homolog 2 (380 aa).

Residues Arg8–His12 carry the Nuclear localization signal motif. An interaction with MLH1 region spans residues Val15–Asn40. Residue Lys194 forms a Glycyl lysine isopeptide (Lys-Gly) (interchain with G-Cter in SUMO) linkage. The HhH domain occupies Phe228 to Leu252. The Nucleophile; for N-glycosylase activity role is filled by Lys248. The [4Fe-4S] cluster site is built by Cys319, Cys326, Cys329, and Cys335. Residues Arg376–Lys380 carry the Nuclear localization signal motif.

Belongs to the Nth/MutY family. In terms of assembly, interacts with MLH1. [4Fe-4S] cluster is required as a cofactor. Monosumoylated.

The protein resides in the nucleus. The enzyme catalyses 2'-deoxyribonucleotide-(2'-deoxyribose 5'-phosphate)-2'-deoxyribonucleotide-DNA = a 3'-end 2'-deoxyribonucleotide-(2,3-dehydro-2,3-deoxyribose 5'-phosphate)-DNA + a 5'-end 5'-phospho-2'-deoxyribonucleoside-DNA + H(+). Its function is as follows. Bifunctional DNA N-glycosylase with associated apurinic/apyrimidinic (AP) lyase function that catalyzes the first step in base excision repair (BER), the primary repair pathway for the repair of oxidative DNA damage. The DNA N-glycosylase activity releases the damaged DNA base from DNA by cleaving the N-glycosidic bond, leaving an AP site. The AP-lyase activity cleaves the phosphodiester bond 3' to the AP site by a beta-elimination. Primarily recognizes and repairs oxidative base damage of pyrimidines, but also purine-derived lesions, alkylation damage as well as abasic sites. Can also repair the oxidation products of 8-oxoguanine. This chain is Endonuclease III homolog 2 (NTG2), found in Saccharomyces cerevisiae (strain ATCC 204508 / S288c) (Baker's yeast).